A 390-amino-acid polypeptide reads, in one-letter code: Phosphoglycerate kinase (390 aa).

Substrate contacts are provided by residues 21–23 (DMN), Arg36, 59–62 (HLGR), Arg113, and Arg146. ATP contacts are provided by residues Lys197, Glu319, and 345–348 (GGDT).

It belongs to the phosphoglycerate kinase family. Monomer.

The protein resides in the cytoplasm. The enzyme catalyses (2R)-3-phosphoglycerate + ATP = (2R)-3-phospho-glyceroyl phosphate + ADP. It functions in the pathway carbohydrate degradation; glycolysis; pyruvate from D-glyceraldehyde 3-phosphate: step 2/5. The sequence is that of Phosphoglycerate kinase from Laribacter hongkongensis (strain HLHK9).